The primary structure comprises 480 residues: Heparin cofactor 2 (480 aa).

A signal peptide spans 1–19; sequence MQHRPHLLLISLTIMSVCG. Residue Asn32 is glycosylated (N-linked (GlcNAc...) asparagine). 2 tandem repeats follow at residues 56 to 66 and 70 to 80. Residues 56–80 are 2 X 11 AA approximate repeats, Asp/Glu-rich (acidic) (hirudin-like); sequence GEEDDDYLDLEKLLSEDDDYIDIID. A sulfotyrosine mark is found at Tyr62 and Tyr75. Asn169 carries an N-linked (GlcNAc...) asparagine glycan. Positions 173–193 are glycosaminoglycan-binding site; the sequence is KYEILTIHNLFRKLTHRLFRR. Residues Asn368 and Asn404 are each glycosylated (N-linked (GlcNAc...) asparagine).

Belongs to the serpin family. Post-translationally, N-glycosylated; different glycan composition appears to lead to two forms of this protein (56 and 60 kDa).

Functionally, thrombin inhibitor activated by the glycosaminoglycans, heparin or dermatan sulfate. In the presence of the latter, HC-II becomes the predominant thrombin inhibitor in place of antithrombin III (AT). This chain is Heparin cofactor 2 (SERPIND1), found in Oryctolagus cuniculus (Rabbit).